We begin with the raw amino-acid sequence, 209 residues long: Small ribosomal subunit protein uS4 (209 aa).

The S4 RNA-binding domain maps to 99 to 164 (TRLDNVVYRM…IPRVQELKEL (66 aa)).

The protein belongs to the universal ribosomal protein uS4 family. In terms of assembly, part of the 30S ribosomal subunit. Contacts protein S5. The interaction surface between S4 and S5 is involved in control of translational fidelity.

Functionally, one of the primary rRNA binding proteins, it binds directly to 16S rRNA where it nucleates assembly of the body of the 30S subunit. In terms of biological role, with S5 and S12 plays an important role in translational accuracy. The chain is Small ribosomal subunit protein uS4 from Natranaerobius thermophilus (strain ATCC BAA-1301 / DSM 18059 / JW/NM-WN-LF).